The chain runs to 92 residues: Large ribosomal subunit protein eL42 (92 aa).

Residues Cys11, Cys14, Cys70, and Cys73 each contribute to the Zn(2+) site. The segment at 11 to 73 (CPNCRKHTVH…LDLRLKCKEC (63 aa)) adopts a C4-type zinc-finger fold.

Belongs to the eukaryotic ribosomal protein eL42 family. In terms of assembly, part of the 50S ribosomal subunit. Zn(2+) serves as cofactor.

Functionally, binds to the 23S rRNA. The sequence is that of Large ribosomal subunit protein eL42 from Methanothermobacter thermautotrophicus (strain ATCC 29096 / DSM 1053 / JCM 10044 / NBRC 100330 / Delta H) (Methanobacterium thermoautotrophicum).